We begin with the raw amino-acid sequence, 29 residues long: Mycofactocin precursor peptide (29 aa).

The protein belongs to the mycofactocin precursor peptide family. The post-translational modifications that lead to mycofactocin involve oxidative decarboxylation of the C-terminal tyrosine residue catalyzed by MftC, introduction of a tyramine-valine cross-link, removal of the modified C-terminal dipeptide by MftE. The released dipeptide then undergoes oxidative deamination by MftD, glycosylation by MftF and methylation by an unknown enzyme.

Functionally, precursor peptide that leads to mycofactocin (MFT) after extensive post-translational modifications by enzymes encoded by adjacent genes. Mycofactocin acts as a redox cofactor of nicotinamide-dependent oxidoreductases encoded in the same locus. This Mycobacterium tuberculosis (strain ATCC 25618 / H37Rv) protein is Mycofactocin precursor peptide.